The following is a 504-amino-acid chain: Histidine ammonia-lyase (504 aa).

The segment at residues 142-144 (ASG) is a cross-link (5-imidazolinone (Ala-Gly)). S143 carries the post-translational modification 2,3-didehydroalanine (Ser).

It belongs to the PAL/histidase family. Contains an active site 4-methylidene-imidazol-5-one (MIO), which is formed autocatalytically by cyclization and dehydration of residues Ala-Ser-Gly.

It is found in the cytoplasm. It catalyses the reaction L-histidine = trans-urocanate + NH4(+). It functions in the pathway amino-acid degradation; L-histidine degradation into L-glutamate; N-formimidoyl-L-glutamate from L-histidine: step 1/3. This Staphylococcus aureus (strain USA300) protein is Histidine ammonia-lyase.